Reading from the N-terminus, the 369-residue chain is Outer membrane porin F (369 aa).

Residues 1 to 21 (MKRNILAVVIPALLVAGTANA) form the signal peptide. A beta stranded membrane pass occupies residues 22-27 (AEIFNK). Residue D28 is a topological domain, periplasmic. A beta stranded transmembrane segment spans residues 29–44 (GNKLDLYGKVDVRHQF). At 45–55 (ADKRSSEDGDD) the chain is on the extracellular side. A beta stranded membrane pass occupies residues 56–68 (SYARIGIKGETQI). Over 69–70 (SD) the chain is Periplasmic. Residues 71–83 (QLTGFGRWEYNVK) traverse the membrane as a beta stranded segment. The Extracellular portion of the chain corresponds to 84 to 97 (AKGTEAAVAESSTR). A beta stranded transmembrane segment spans residues 98–106 (LAFAGLKFA). Residues 107–108 (NY) are Periplasmic-facing. A beta stranded transmembrane segment spans residues 109 to 115 (GSLDYGR). The Extracellular portion of the chain corresponds to 116–150 (NYGVNYDVNAWTDVLPIFGGDAMAQTDNFMTGRST). The chain crosses the membrane as a beta stranded span at residues 151–157 (GLLTYRN). Topologically, residues 158–165 (TDFFGLVD) are periplasmic. A beta stranded membrane pass occupies residues 166–177 (GLNFALQYQGQN). The Extracellular segment spans residues 178-193 (SDRTKNKGRDTERSNG). Residues 194-204 (DGYGLSSTYDV) traverse the membrane as a beta stranded segment. Residues 205–206 (GY) are Periplasmic-facing. Residues 207–219 (GITVGGSYANSAR) form a beta stranded membrane-spanning segment. Over 220 to 234 (TADQKEKVSDAYGKR) the chain is Extracellular. Residues 235–246 (AEAWNIGAKYDA) traverse the membrane as a beta stranded segment. A topological domain (periplasmic) is located at residue N247. A beta stranded membrane pass occupies residues 248–259 (NVYLAAMYGETR). Residues 260-278 (NMTRYTRTIADTDATLIAN) are Extracellular-facing. A beta stranded membrane pass occupies residues 279-291 (KTQNIELTAQYLF). Topologically, residues 292 to 294 (SDL) are periplasmic. A beta stranded transmembrane segment spans residues 295-308 (GLKPSLAYVQSKGK). Over 309 to 320 (DLTEGKGFNGDL) the chain is Extracellular. A beta stranded membrane pass occupies residues 321 to 332 (VKYVSVGTYYYF). At 333–334 (NK) the chain is on the periplasmic side. A beta stranded transmembrane segment spans residues 335–344 (NLSTYVDYKI). At 345–359 (NLLKKDNELGVNARN) the chain is on the extracellular side. Residues 360 to 369 (VFGVGLTYQF) form a beta stranded membrane-spanning segment.

The protein belongs to the Gram-negative porin family. In terms of assembly, homotrimer.

The protein localises to the cell outer membrane. In terms of biological role, forms pores that allow passive diffusion of small molecules across the outer membrane. The protein is Outer membrane porin F (ompF) of Xenorhabdus nematophila (strain ATCC 19061 / DSM 3370 / CCUG 14189 / LMG 1036 / NCIMB 9965 / AN6).